We begin with the raw amino-acid sequence, 259 residues long: Probable ABC transporter permease protein RC0129 (259 aa).

The next 5 helical transmembrane spans lie at 13–35 (TVKFAQSVGSFSLFSFAAVSSII), 49–69 (LFIGFHSLPVVAMTTFFSGAV), 148–168 (VITAIITMPCLVLIGDIIGVM), 195–215 (PIDVISGLVKAGVFGFIISII), and 237–257 (AVVNSSILILISNYLITELFF).

It belongs to the MlaE permease family.

It is found in the cell inner membrane. In terms of biological role, could be part of an ABC transporter complex. The chain is Probable ABC transporter permease protein RC0129 from Rickettsia conorii (strain ATCC VR-613 / Malish 7).